Consider the following 463-residue polypeptide: Competence protein ComFA (463 aa).

4 residues coordinate Zn(2+): C60, C63, C84, and C87. The 153-residue stretch at 133-285 (IEAISKKEEL…LNGQLHSVRI (153 aa)) folds into the Helicase ATP-binding domain. 146–153 (AVCGAGKT) is a binding site for ATP. The DEAD box signature appears at 233-236 (DEVD). One can recognise a Helicase C-terminal domain in the interval 317 to 463 (AVKRWIEFHV…ELAAKVECTD (147 aa)).

This sequence belongs to the DEAD box helicase family. As to quaternary structure, monomer and dimer in solution. Interacts with DprA and ComFC; ComFA-ComFC form rings about 150 Angstroms in diameter with apparent 6-fold symmetry. Zn(2+) is required as a cofactor.

It is found in the cytoplasm. In terms of biological role, involved in transformation (genetic competence for DNA uptake). Required for DNA uptake but not for DNA binding to cells. DNA uptake is energy dependent, this protein may provide the driving force for DNA uptake. Does not have helicase activity, translocates on single-stranded (ss)DNA in a 5'-3' direction in an ATP-dependent manner, but does not unwind double-stranded (ds)DNA. ATP hydrolysis causes the release of ssDNA from ComFA. A ssDNA-stimulated ATPase; dsDNA does not stimulate ATPase. ATP hydrolysis causes the release of ssDNA from ComFA. Binds ssDNA but only very poorly to dsDNA in the absence of ATP. Binding to ssDNA does not require free DNA ends. This Bacillus subtilis (strain 168) protein is Competence protein ComFA.